A 205-amino-acid chain; its full sequence is Dephospho-CoA kinase (205 aa).

The DPCK domain occupies K3–Q204. G11 to E16 contacts ATP.

The protein belongs to the CoaE family.

The protein resides in the cytoplasm. The enzyme catalyses 3'-dephospho-CoA + ATP = ADP + CoA + H(+). The protein operates within cofactor biosynthesis; coenzyme A biosynthesis; CoA from (R)-pantothenate: step 5/5. Catalyzes the phosphorylation of the 3'-hydroxyl group of dephosphocoenzyme A to form coenzyme A. This Streptomyces avermitilis (strain ATCC 31267 / DSM 46492 / JCM 5070 / NBRC 14893 / NCIMB 12804 / NRRL 8165 / MA-4680) protein is Dephospho-CoA kinase.